The primary structure comprises 130 residues: Histone H2A type 2-B (130 aa).

Residues 1-22 form a disordered region; the sequence is MSGRGKQGGKARAKAKSRSSRA. Position 2 is an N-acetylserine (serine 2). The residue at position 2 (serine 2) is a Phosphoserine; by RPS6KA5. Arginine 4 is subject to Citrulline; alternate. Arginine 4 carries the symmetric dimethylarginine; by PRMT5; alternate modification. Lysine 6 bears the N6-(2-hydroxyisobutyryl)lysine mark. Residues 7-19 are compositionally biased toward basic residues; the sequence is QGGKARAKAKSRS. At lysine 10 the chain carries N6-(2-hydroxyisobutyryl)lysine; alternate. N6-(beta-hydroxybutyryl)lysine; alternate occurs at positions 10 and 14. Residue lysine 10 is modified to N6-lactoyllysine; alternate. Lysine 10 is modified (N6-succinyllysine; alternate). A Glycyl lysine isopeptide (Lys-Gly) (interchain with G-Cter in ubiquitin); alternate cross-link involves residue lysine 14. A Glycyl lysine isopeptide (Lys-Gly) (interchain with G-Cter in ubiquitin) cross-link involves residue lysine 16. N6-(2-hydroxyisobutyryl)lysine; alternate is present on lysine 37. Lysine 37 carries the post-translational modification N6-(beta-hydroxybutyryl)lysine; alternate. Lysine 37 bears the N6-crotonyllysine; alternate mark. N6-(2-hydroxyisobutyryl)lysine is present on residues lysine 75 and lysine 76. At lysine 96 the chain carries N6-(2-hydroxyisobutyryl)lysine; alternate. Lysine 96 is subject to N6-(beta-hydroxybutyryl)lysine; alternate. N6-succinyllysine; alternate is present on lysine 96. Lysine 96 is modified (N6-glutaryllysine; alternate). Glutamine 105 is modified (N5-methylglutamine). Lysine 119 bears the N6-(2-hydroxyisobutyryl)lysine; alternate mark. The residue at position 119 (lysine 119) is an N6-(beta-hydroxybutyryl)lysine; alternate. Residues lysine 119 and lysine 120 each carry the N6-crotonyllysine; alternate modification. An N6-glutaryllysine; alternate mark is found at lysine 119 and lysine 120. A Glycyl lysine isopeptide (Lys-Gly) (interchain with G-Cter in ubiquitin); alternate cross-link involves residue lysine 120. Threonine 121 is subject to Phosphothreonine; by DCAF1.

The protein belongs to the histone H2A family. In terms of assembly, the nucleosome is a histone octamer containing two molecules each of H2A, H2B, H3 and H4 assembled in one H3-H4 heterotetramer and two H2A-H2B heterodimers. The octamer wraps approximately 147 bp of DNA. In terms of processing, deiminated on Arg-4 in granulocytes upon calcium entry. Monoubiquitination of Lys-120 (H2AK119Ub) by RING1, TRIM37 and RNF2/RING2 complex gives a specific tag for epigenetic transcriptional repression and participates in X chromosome inactivation of female mammals. It is involved in the initiation of both imprinted and random X inactivation. Ubiquitinated H2A is enriched in inactive X chromosome chromatin. Ubiquitination of H2A functions downstream of methylation of 'Lys-27' of histone H3 (H3K27me). H2AK119Ub by RNF2/RING2 can also be induced by ultraviolet and may be involved in DNA repair. Monoubiquitination of Lys-120 (H2AK119Ub) by TRIM37 may promote transformation of cells in a number of breast cancers. Following DNA double-strand breaks (DSBs), it is ubiquitinated through 'Lys-63' linkage of ubiquitin moieties by the E2 ligase UBE2N and the E3 ligases RNF8 and RNF168, leading to the recruitment of repair proteins to sites of DNA damage. Ubiquitination at Lys-14 and Lys-16 (H2AK13Ub and H2AK15Ub, respectively) in response to DNA damage is initiated by RNF168 that mediates monoubiquitination at these 2 sites, and 'Lys-63'-linked ubiquitin are then conjugated to monoubiquitin; RNF8 is able to extend 'Lys-63'-linked ubiquitin chains in vitro. Deubiquitinated by USP51 at Lys-14 and Lys-16 (H2AK13Ub and H2AK15Ub, respectively) after damaged DNA is repaired. H2AK119Ub and ionizing radiation-induced 'Lys-63'-linked ubiquitination (H2AK13Ub and H2AK15Ub) are distinct events. Post-translationally, phosphorylation on Ser-2 (H2AS1ph) is enhanced during mitosis. Phosphorylation on Ser-2 by RPS6KA5/MSK1 directly represses transcription. Acetylation of H3 inhibits Ser-2 phosphorylation by RPS6KA5/MSK1. Phosphorylation at Thr-121 (H2AT120ph) by DCAF1 is present in the regulatory region of many tumor suppresor genes and down-regulates their transcription. In terms of processing, symmetric dimethylation on Arg-4 by the PRDM1/PRMT5 complex may play a crucial role in the germ-cell lineage. Glutamine methylation at Gln-105 (H2AQ104me) by FBL is specifically dedicated to polymerase I. It is present at 35S ribosomal DNA locus and impairs binding of the FACT complex. Post-translationally, crotonylation (Kcr) is specifically present in male germ cells and marks testis-specific genes in post-meiotic cells, including X-linked genes that escape sex chromosome inactivation in haploid cells. Crotonylation marks active promoters and enhancers and confers resistance to transcriptional repressors. It is also associated with post-meiotically activated genes on autosomes. In terms of processing, lactylated in macrophages by EP300/P300 by using lactoyl-CoA directly derived from endogenous or exogenous lactate, leading to stimulates gene transcription.

Its subcellular location is the nucleus. The protein resides in the chromosome. Core component of nucleosome. Nucleosomes wrap and compact DNA into chromatin, limiting DNA accessibility to the cellular machineries which require DNA as a template. Histones thereby play a central role in transcription regulation, DNA repair, DNA replication and chromosomal stability. DNA accessibility is regulated via a complex set of post-translational modifications of histones, also called histone code, and nucleosome remodeling. The chain is Histone H2A type 2-B from Homo sapiens (Human).